The following is a 130-amino-acid chain: Small ribosomal subunit protein uS8 (130 aa).

It belongs to the universal ribosomal protein uS8 family. In terms of assembly, part of the 30S ribosomal subunit.

Its function is as follows. One of the primary rRNA binding proteins, it binds directly to 16S rRNA central domain where it helps coordinate assembly of the platform of the 30S subunit. In Methanococcus maripaludis (strain C7 / ATCC BAA-1331), this protein is Small ribosomal subunit protein uS8.